A 305-amino-acid polypeptide reads, in one-letter code: Sulfate adenylyltransferase subunit 2 (305 aa).

The protein belongs to the PAPS reductase family. CysD subfamily. Heterodimer composed of CysD, the smaller subunit, and CysN.

The catalysed reaction is sulfate + ATP + H(+) = adenosine 5'-phosphosulfate + diphosphate. It participates in sulfur metabolism; hydrogen sulfide biosynthesis; sulfite from sulfate: step 1/3. In terms of biological role, with CysN forms the ATP sulfurylase (ATPS) that catalyzes the adenylation of sulfate producing adenosine 5'-phosphosulfate (APS) and diphosphate, the first enzymatic step in sulfur assimilation pathway. APS synthesis involves the formation of a high-energy phosphoric-sulfuric acid anhydride bond driven by GTP hydrolysis by CysN coupled to ATP hydrolysis by CysD. The sequence is that of Sulfate adenylyltransferase subunit 2 from Pseudomonas syringae pv. tomato (strain ATCC BAA-871 / DC3000).